Here is a 416-residue protein sequence, read N- to C-terminus: Gap junction alpha-3 protein (416 aa).

The stretch at 2 to 15 (GDWSFLGRLLENAQ) is an intramembrane region. At 16-19 (EHST) the chain is on the cytoplasmic side. The chain crosses the membrane as a helical span at residues 20-40 (VIGKVWLTVLFIFRILVLGAA). Over 41-71 (AEEVWGDEQSDFTCNTQQPGCENVCYDRAFP) the chain is Extracellular. Disulfide bonds link C54–C198, C61–C192, and C65–C187. A helical membrane pass occupies residues 72-92 (ISHIRFWALQIIFVSTPTLIY). Residues 93-158 (LGHVLHIVRM…GALLRTYVFN (66 aa)) lie on the Cytoplasmic side of the membrane. A compositionally biased stretch (basic and acidic residues) spans 110-128 (EEELLRRDNPQHGRGREPM). Positions 110–141 (EEELLRRDNPQHGRGREPMRTGSPRDPPLRDD) are disordered. Residues 159-179 (IIFKTLFEVGFIAGQYFLYGF) traverse the membrane as a helical segment. Topologically, residues 180-207 (QLQPLYRCDRWPCPNTVDCFISRPTEKT) are extracellular. The helical transmembrane segment at 208–228 (IFVIFMLAVACASLVLNMLEI) threads the bilayer. The Cytoplasmic segment spans residues 229–416 (YHLGWKKLKQ…GRARPGDLAI (188 aa)). A disordered region spans residues 336–416 (GAEPQTPASK…GRARPGDLAI (81 aa)). Positions 342 to 353 (PASKPSSAASSP) are enriched in low complexity.

This sequence belongs to the connexin family. Alpha-type (group II) subfamily. As to quaternary structure, a hemichannel or connexon is composed of a hexamer of connexins. A functional gap junction is formed by the apposition of two hemichannels. Forms heteromeric channels with GJA8. Detected in eye lens (at protein level). Most abundant in lens, but also present in heart and kidney.

The protein resides in the cell membrane. The protein localises to the cell junction. It is found in the gap junction. Its function is as follows. Structural component of lens fiber gap junctions. Gap junctions are dodecameric channels that connect the cytoplasm of adjoining cells. They are formed by the docking of two hexameric hemichannels, one from each cell membrane. Small molecules and ions diffuse from one cell to a neighboring cell via the central pore. The polypeptide is Gap junction alpha-3 protein (Gja3) (Rattus norvegicus (Rat)).